The primary structure comprises 100 residues: Urease subunit gamma (100 aa).

The protein belongs to the urease gamma subunit family. Heterotrimer of UreA (gamma), UreB (beta) and UreC (alpha) subunits. Three heterotrimers associate to form the active enzyme.

Its subcellular location is the cytoplasm. It catalyses the reaction urea + 2 H2O + H(+) = hydrogencarbonate + 2 NH4(+). Its pathway is nitrogen metabolism; urea degradation; CO(2) and NH(3) from urea (urease route): step 1/1. This chain is Urease subunit gamma, found in Nostoc punctiforme (strain ATCC 29133 / PCC 73102).